The following is a 499-amino-acid chain: MSNNWKSVRLRLQNRTLVFLLVILSFGSCYSLKSQGDGFLESVTKDLWSDIDAEDLRAVGFHRKLLGRFRNPYTHLNAFRDRPVARATPPSSSVSTRPDAKRSSTLPPPQKSPPAQHVSAPPPFVHHVTLPSLTSSSKTSSNSTIPIVAGCIAGAVFILLLATGVFFFKSKAGKSVNPWRTGLSGQLQKVFITGVPKLKRSEIEAACEDFSNVIGSCPIGTLFKGTLSSGVEIAVASVATASAKEWTNNIEMQFRKKIEMLSKINHKNFVNLLGYCEEEEPFTRILVFEYASNGTVFEHLHYKESEHLDWVMRLRIAMGIAYCLDHMHGLKPPIVHSNLLSSSVQLTEDYAVKIADFNFGYLKGPSETESSTNALIDTNISETTQEDNVHSFGLLLFELMTGKLPESVQKGDSIDTGLAVFLRGKTLREMVDPTIESFDEKIENIGEVIKSCIRADAKQRPIMKEVTGRLREITGLSPDDTIPKLSPLWWAELEVLSTA.

Residues 1 to 31 (MSNNWKSVRLRLQNRTLVFLLVILSFGSCYS) form the signal peptide. N14 is a glycosylation site (N-linked (GlcNAc...) asparagine). Over 32 to 146 (LKSQGDGFLE…SKTSSNSTIP (115 aa)) the chain is Extracellular. Positions 80–121 (RDRPVARATPPSSSVSTRPDAKRSSTLPPPQKSPPAQHVSAP) are disordered. N-linked (GlcNAc...) asparagine glycosylation occurs at N142. The chain crosses the membrane as a helical span at residues 147-167 (IVAGCIAGAVFILLLATGVFF). Over 168 to 499 (FKSKAGKSVN…WAELEVLSTA (332 aa)) the chain is Cytoplasmic. Residues 208–474 (EDFSNVIGSC…EVTGRLREIT (267 aa)) form the Protein kinase domain.

It localises to the cell membrane. The protein is Probable inactive receptor-like protein kinase At3g56050 of Arabidopsis thaliana (Mouse-ear cress).